Here is a 623-residue protein sequence, read N- to C-terminus: Chaperone protein DnaK (623 aa).

A Phosphothreonine; by autocatalysis modification is found at Thr-197. The segment covering 595 to 615 has biased composition (basic and acidic residues); that stretch reads AENMYKKDEPNTANDKKKKDD. The disordered stretch occupies residues 595–623; it reads AENMYKKDEPNTANDKKKKDDDVIDAEVE.

It belongs to the heat shock protein 70 family.

Its function is as follows. Acts as a chaperone. The polypeptide is Chaperone protein DnaK (Campylobacter jejuni subsp. doylei (strain ATCC BAA-1458 / RM4099 / 269.97)).